We begin with the raw amino-acid sequence, 195 residues long: Ribonuclease HII (195 aa).

Residues 8 to 195 (WGVVGVDEAG…FAPVRRLLGG (188 aa)) enclose the RNase H type-2 domain. Aspartate 14, glutamate 15, and aspartate 106 together coordinate a divalent metal cation.

Belongs to the RNase HII family. Mn(2+) serves as cofactor. Mg(2+) is required as a cofactor.

It localises to the cytoplasm. The enzyme catalyses Endonucleolytic cleavage to 5'-phosphomonoester.. Its function is as follows. Endonuclease that specifically degrades the RNA of RNA-DNA hybrids. This chain is Ribonuclease HII, found in Halorhodospira halophila (strain DSM 244 / SL1) (Ectothiorhodospira halophila (strain DSM 244 / SL1)).